Consider the following 448-residue polypeptide: Probable intron-encoded endonuclease bI1 (448 aa).

Residues 1-132 (MRLLKSHPLL…LMMATAFLGY (132 aa)) are cob exon 1 encoded. 3 helical membrane-spanning segments follow: residues 32–52 (FGSLLACCLIIQIVTGVTLAM), 86–106 (ASAFFFLVYLHIGRGMYYGSY), and 112–132 (LVWAIGTVILILMMATAFLGY). The tract at residues 133–448 (QHSPKWFDIS…QWIVEDFSDK (316 aa)) is cob intron 1 encoded. One can recognise a GIY-YIG domain in the interval 230–321 (DLSGVYMIIN…LKLLVPNYNI (92 aa)).

It to endonucleases of group I introns of fungi and phage. Post-translationally, the mature protein may arise from proteolytic cleavage of an in-frame translation of cob exon 1 plus intron 1, containing the bI1 open reading frame.

It localises to the mitochondrion inner membrane. In terms of biological role, mitochondrial DNA endonuclease involved in intron homing. This chain is Probable intron-encoded endonuclease bI1 (bI1), found in Neurospora crassa (strain ATCC 24698 / 74-OR23-1A / CBS 708.71 / DSM 1257 / FGSC 987).